We begin with the raw amino-acid sequence, 522 residues long: FAD-dependent monooxygenase fsr3 (522 aa).

Residues 1-27 (MKNTQTNGTHPIIDKKPNGTLNGDHQE) form a disordered region. Arg164 contributes to the FAD binding site. Arg245 is an active-site residue. 2 residues coordinate FAD: Asp369 and Ala382.

Belongs to the paxM FAD-dependent monooxygenase family. It depends on FAD as a cofactor.

The protein operates within polyketide biosynthesis. FAD-dependent monooxygenase; part of the gene cluster that mediates the biosynthesis of fusarubins, highly pigmented naphthoquinones responsible for the coloration of the fruiting bodies. The non-reducing polyketide synthase FSR1 is responsible for the condensation of seven acetyl-CoA units to yield a haptaketide. After rings A and B are formed by aldol-type cyclization, the PKS-derived product is released as 6-O-demethylfusarubinaldehyde. Then, two hydroxyl groups at C-5 and C-10 are incorporated by FSR3, and simultaneously hydroxyl groups at C-6 and C-8 are methylated by FSR2. The aldehyde is, on the one hand, reduced by FSR3 to 8-O-methylfusarubin alcohol, which equilibrates mainly with 8-O-methylfusarubin and only small amounts of 8-O-methylnectriafurone. On the other hand, the aldehyde can be oxidized to form 8-O-methylfusarubinic acid, a reaction driven by FSR3 equilibrating with 8-O-methylfusarubinlactone, finally resulting in 8-O-methylanhydrofusarubinlactol after a further reduction step and loss of water. 8-O-Methylfusarubinic acid can also undergo decarboxylation, resulting in 8-O-methyl-13-hydroxynorjavanicin after another hydroxylation step at C-13. Both steps are most likely also accomplished by FSR3. No enzymatic function has been determined so far for either FSR4 and FSR5. Their deletion does not alter the product spectrum, but the possibility that they catalyze specific enzymatic steps during perithecium development cannot be ruled out. FSR4 might possess a regulatory function in the biosynthesis of fusarubins. This is FAD-dependent monooxygenase fsr3 from Gibberella fujikuroi (strain CBS 195.34 / IMI 58289 / NRRL A-6831) (Bakanae and foot rot disease fungus).